A 411-amino-acid polypeptide reads, in one-letter code: uncharacterized protein (411 aa).

It in the C-terminal section; belongs to the PAPS reductase family.

This is an uncharacterized protein from Methanocaldococcus jannaschii (strain ATCC 43067 / DSM 2661 / JAL-1 / JCM 10045 / NBRC 100440) (Methanococcus jannaschii).